The primary structure comprises 198 residues: MSEMQTREMLIGEIKLFNKWSYDFIEVRDPSLKKYICLKPVYLPHSGGRHEHKRFGKALVPIVERLINNVMRPGRNMGKKHLAYNIVKKSFELIYLKTGENPLQVLVRAIENAAPREETTRIMYGGITYHVSVDIAPLRRIDLALRHLTEGARLKAFHNPISIEEALAEEIALAASNDPKSYAVQKKEEIERIALSSR.

Belongs to the universal ribosomal protein uS7 family. In terms of assembly, part of the 30S ribosomal subunit.

Functionally, one of the primary rRNA binding proteins, it binds directly to 16S rRNA where it nucleates assembly of the head domain of the 30S subunit. Is located at the subunit interface close to the decoding center. The chain is Small ribosomal subunit protein uS7 from Desulfurococcus amylolyticus (strain DSM 18924 / JCM 16383 / VKM B-2413 / 1221n) (Desulfurococcus kamchatkensis).